The primary structure comprises 342 residues: (Lyso)-N-acylphosphatidylethanolamine lipase (342 aa).

Residues 70 to 324 (PLVMVHGFGG…IEGASHHVYA (255 aa)) enclose the AB hydrolase-1 domain.

The protein belongs to the peptidase S33 family. ABHD4/ABHD5 subfamily.

The catalysed reaction is N-hexadecanoyl-1,2-di-(9Z-octadecenoyl)-sn-glycero-3-phosphoethanolamine + H2O = N-hexadecanoyl-1-(9Z-octadecenoyl)-sn-glycero-3-phosphoethanolamine + (9Z)-octadecenoate + H(+). The enzyme catalyses an N-acyl-1,2-diacyl-sn-glycero-3-phosphoethanolamine + H2O = N,1-diacyl-sn-glycero-3-phosphoethanolamine + a fatty acid + H(+). It carries out the reaction N-hexadecanoyl-1-(9Z-octadecenoyl)-sn-glycero-3-phosphoethanolamine + H2O = N-hexadecanoyl-sn-glycero-3-phosphoethanolamine + (9Z)-octadecenoate + H(+). It catalyses the reaction N-octadecanoyl-1-(9Z-octadecenoyl)-sn-glycero-3-phosphoethanolamine + H2O = N-octadecanoyl-sn-glycero-3-phospho-ethanolamine + (9Z)-octadecenoate + H(+). The catalysed reaction is N-eicosanoyl-1-(9Z-octadecenoyl)-sn-glycero-3-phosphoethanolamine + H2O = N-eicosanoyl-sn-glycero-3-phosphoethanolamine + (9Z)-octadecenoate + H(+). The enzyme catalyses N,1-di-(9Z-octadecenoyl)-sn-glycero-3-phosphoethanolamine + H2O = N-(9Z-octadecenoyl)-sn-glycero-3-phosphoethanolamine + (9Z)-octadecenoate + H(+). It carries out the reaction N-(5Z,8Z,11Z,14Z-eicosatetraenoyl)-1-(9Z-octadecenoyl)-sn-glycero-3-phosphoethanolamine + H2O = N-(5Z,8Z,11Z,14Z-eicosatetraenoyl)-sn-glycero-3-phosphoethanolamine + (9Z)-octadecenoate + H(+). It catalyses the reaction 1-octadecanoyl-2-(9Z-octadecenoyl)-sn-glycero-3-phospho-(N-hexadecanoyl)-serine + H2O = 1-octadecanoyl-2-hydroxy-sn-glycero-3-phospho-(N-hexadecanoyl)-serine + (9Z)-octadecenoate + H(+). The catalysed reaction is 1-O-(1Z-octadecenoyl)-2-(9Z-octadecenoyl)-sn-glycero-3-phospho-N-hexadecanoyl-ethanolamine + H2O = 1-O-(1Z-octadecenyl)-sn-glycero-3-phospho-N-hexadecanoyl-ethanolamine + (9Z)-octadecenoate + H(+). The enzyme catalyses N,1-diacyl-sn-glycero-3-phosphoethanolamine + H2O = N-acyl-sn-glycero-3-phosphoethanolamine + a fatty acid + H(+). In terms of biological role, lysophospholipase selective for N-acyl phosphatidylethanolamine (NAPE). Contributes to the biosynthesis of N-acyl ethanolamines, including the endocannabinoid anandamide by hydrolyzing the sn-1 and sn-2 acyl chains from N-acyl phosphatidylethanolamine (NAPE) generating glycerophospho-N-acyl ethanolamine (GP-NAE), an intermediate for N-acyl ethanolamine biosynthesis. Hydrolyzes substrates bearing saturated, monounsaturated, polyunsaturated N-acyl chains. Shows no significant activity towards other lysophospholipids, including lysophosphatidylcholine, lysophosphatidylethanolamine and lysophosphatidylserine. This is (Lyso)-N-acylphosphatidylethanolamine lipase from Bos taurus (Bovine).